The primary structure comprises 860 residues: MQEQYRPEEIESKVQLHWDEKRTFEVTEDESKEKYYCLSMLPYPSGRLHMGHVRNYTIGDVIARYQRMLGKNVLQPIGWDAFGLPAEGAAVKNNTAPAPWTYDNIAYMKNQLKMLGFGYDWSRELATCTPEYYRWEQKFFTELYKKGLVYKKTSAVNWCPNDQTVLANEQVIDGCCWRCDTKVERKEIPQWFIKITAYADELLNDLDKLDHWPDTVKTMQRNWIGRSEGVEITFNVNDYDNTLTVYTTRPDTFMGCTYLAVAAGHPLAQKAAENNPELAAFIDECRNTKVAEAEMATMEKKGVDTGFKAVHPLTGEEIPVWAANFVLMEYGTGAVMAVPGHDQRDYEFASKYGLNIKPVILAADGSEPDLSQQALTEKGVLFNSGEFNGLDHEAAFNAIADKLTAMGVGERKVNYRLRDWGVSRQRYWGAPIPMVTLEDGTVMPTPDDQLPVILPEDVVMDGITSPIKADPEWAKTTVNGMPALRETDTFDTFMESSWYYARYTCPEYKEGMLDSEAANYWLPVDIYIGGIEHAIMHLLYFRFFHKLMRDAGMVNSDEPAKQLLCQGMVLADAFYYVGENGERNWVSPVDAIVERDEKGRIVKAKDAAGHELVYTGMSKMSKSKNNGIDPQVMVERYGADTVRLFMMFASPADMTLEWQESGVEGANRFLKRVWKLVYEHTAKGDVAALNVDALTEDQKALRRDVHKTIAKVTDDIGRRQTFNTAIAAIMELMNKLAKAPTDGEQDRALMQEALLAVVRMLNPFTPHICFTLWQELKGEGDIDNAPWPVADEKAMVEDSTLVVVQVNGKVRAKITVPVDATEEQVRERAGQEHLVAKYLDGVTVRKVIYVPGKLLNLVVG.

A 'HIGH' region motif is present at residues 42-52 (PYPSGRLHMGH). Residues 619 to 623 (KMSKS) carry the 'KMSKS' region motif. Position 622 (K622) interacts with ATP.

It belongs to the class-I aminoacyl-tRNA synthetase family.

It localises to the cytoplasm. The catalysed reaction is tRNA(Leu) + L-leucine + ATP = L-leucyl-tRNA(Leu) + AMP + diphosphate. This is Leucine--tRNA ligase from Escherichia coli (strain 55989 / EAEC).